A 368-amino-acid polypeptide reads, in one-letter code: tRNA(Met) cytidine acetate ligase (368 aa).

ATP-binding positions include 7–20, G96, N152, and R175; that span reads IAEF…HKYL.

The protein belongs to the TmcAL family.

The protein localises to the cytoplasm. The enzyme catalyses cytidine(34) in elongator tRNA(Met) + acetate + ATP = N(4)-acetylcytidine(34) in elongator tRNA(Met) + AMP + diphosphate. Functionally, catalyzes the formation of N(4)-acetylcytidine (ac(4)C) at the wobble position of elongator tRNA(Met), using acetate and ATP as substrates. First activates an acetate ion to form acetyladenylate (Ac-AMP) and then transfers the acetyl group to tRNA to form ac(4)C34. In Streptococcus pyogenes serotype M28 (strain MGAS6180), this protein is tRNA(Met) cytidine acetate ligase.